We begin with the raw amino-acid sequence, 190 residues long: Elongation factor P (190 aa).

It belongs to the elongation factor P family.

Its subcellular location is the cytoplasm. It functions in the pathway protein biosynthesis; polypeptide chain elongation. Involved in peptide bond synthesis. Stimulates efficient translation and peptide-bond synthesis on native or reconstituted 70S ribosomes in vitro. Probably functions indirectly by altering the affinity of the ribosome for aminoacyl-tRNA, thus increasing their reactivity as acceptors for peptidyl transferase. This is Elongation factor P from Persephonella marina (strain DSM 14350 / EX-H1).